Consider the following 253-residue polypeptide: 5'/3'-nucleotidase SurE (253 aa).

Positions 8, 9, 39, and 92 each coordinate a divalent metal cation.

It belongs to the SurE nucleotidase family. Requires a divalent metal cation as cofactor.

The protein resides in the cytoplasm. It catalyses the reaction a ribonucleoside 5'-phosphate + H2O = a ribonucleoside + phosphate. The catalysed reaction is a ribonucleoside 3'-phosphate + H2O = a ribonucleoside + phosphate. It carries out the reaction [phosphate](n) + H2O = [phosphate](n-1) + phosphate + H(+). Its function is as follows. Nucleotidase with a broad substrate specificity as it can dephosphorylate various ribo- and deoxyribonucleoside 5'-monophosphates and ribonucleoside 3'-monophosphates with highest affinity to 3'-AMP. Also hydrolyzes polyphosphate (exopolyphosphatase activity) with the preference for short-chain-length substrates (P20-25). Might be involved in the regulation of dNTP and NTP pools, and in the turnover of 3'-mononucleotides produced by numerous intracellular RNases (T1, T2, and F) during the degradation of various RNAs. The sequence is that of 5'/3'-nucleotidase SurE from Citrobacter koseri (strain ATCC BAA-895 / CDC 4225-83 / SGSC4696).